We begin with the raw amino-acid sequence, 97 residues long: Co-chaperonin GroES (97 aa).

This sequence belongs to the GroES chaperonin family. As to quaternary structure, heptamer of 7 subunits arranged in a ring. Interacts with the chaperonin GroEL.

Its subcellular location is the cytoplasm. Functionally, together with the chaperonin GroEL, plays an essential role in assisting protein folding. The GroEL-GroES system forms a nano-cage that allows encapsulation of the non-native substrate proteins and provides a physical environment optimized to promote and accelerate protein folding. GroES binds to the apical surface of the GroEL ring, thereby capping the opening of the GroEL channel. The chain is Co-chaperonin GroES from Buchnera aphidicola subsp. Baizongia pistaciae (strain Bp).